We begin with the raw amino-acid sequence, 290 residues long: Putative phosphatase MPN_427 (290 aa).

Residue Asp16 is the Nucleophile of the active site. Asp16 is a Mg(2+) binding site. Phosphate is bound at residue Leu17. Asp18 is a binding site for Mg(2+). Phosphate is bound by residues 53–54 (TG) and Lys216. Mg(2+) contacts are provided by Asp239 and Ser240. A phosphate-binding site is contributed by Asn242.

This sequence belongs to the HAD-like hydrolase superfamily. Cof family. Mg(2+) is required as a cofactor.

The polypeptide is Putative phosphatase MPN_427 (Mycoplasma pneumoniae (strain ATCC 29342 / M129 / Subtype 1) (Mycoplasmoides pneumoniae)).